Reading from the N-terminus, the 127-residue chain is MRHQKSGRKFNRTSAHREAMFRNMAASLFKHELIKTTLPKAKELRRVAEPLITIGKVDGVANRRLAFARLRDKEAVGKLFVELGPRYATRPGGYLRILKAGFRAGDNAPMAYVELVGRPVVAEEVAE.

The protein belongs to the bacterial ribosomal protein bL17 family. As to quaternary structure, part of the 50S ribosomal subunit. Contacts protein L32.

The chain is Large ribosomal subunit protein bL17 from Xanthomonas euvesicatoria pv. vesicatoria (strain 85-10) (Xanthomonas campestris pv. vesicatoria).